The sequence spans 390 residues: Queuine tRNA-ribosyltransferase (390 aa).

Asp-92 serves as the catalytic Proton acceptor. Substrate-binding positions include 92-96, Asp-146, Gln-195, and Gly-222; that span reads DSGGF. The tract at residues 253 to 259 is RNA binding; sequence GVGTPED. Residue Asp-272 is the Nucleophile of the active site. The segment at 277–281 is RNA binding; important for wobble base 34 recognition; the sequence is TRNAR. Cys-310, Cys-312, Cys-315, and His-354 together coordinate Zn(2+).

The protein belongs to the queuine tRNA-ribosyltransferase family. Homodimer. Within each dimer, one monomer is responsible for RNA recognition and catalysis, while the other monomer binds to the replacement base PreQ1. The cofactor is Zn(2+).

The catalysed reaction is 7-aminomethyl-7-carbaguanine + guanosine(34) in tRNA = 7-aminomethyl-7-carbaguanosine(34) in tRNA + guanine. It functions in the pathway tRNA modification; tRNA-queuosine biosynthesis. Functionally, catalyzes the base-exchange of a guanine (G) residue with the queuine precursor 7-aminomethyl-7-deazaguanine (PreQ1) at position 34 (anticodon wobble position) in tRNAs with GU(N) anticodons (tRNA-Asp, -Asn, -His and -Tyr). Catalysis occurs through a double-displacement mechanism. The nucleophile active site attacks the C1' of nucleotide 34 to detach the guanine base from the RNA, forming a covalent enzyme-RNA intermediate. The proton acceptor active site deprotonates the incoming PreQ1, allowing a nucleophilic attack on the C1' of the ribose to form the product. After dissociation, two additional enzymatic reactions on the tRNA convert PreQ1 to queuine (Q), resulting in the hypermodified nucleoside queuosine (7-(((4,5-cis-dihydroxy-2-cyclopenten-1-yl)amino)methyl)-7-deazaguanosine). The sequence is that of Queuine tRNA-ribosyltransferase from Delftia acidovorans (strain DSM 14801 / SPH-1).